The primary structure comprises 86 residues: Small ribosomal subunit protein bS20 (86 aa).

It belongs to the bacterial ribosomal protein bS20 family.

Its function is as follows. Binds directly to 16S ribosomal RNA. This chain is Small ribosomal subunit protein bS20, found in Bifidobacterium adolescentis (strain ATCC 15703 / DSM 20083 / NCTC 11814 / E194a).